We begin with the raw amino-acid sequence, 834 residues long: 5-hydroxytryptamine receptor 2A (834 aa).

At 1 to 230 the chain is on the extracellular side; the sequence is MAHETSFNDA…TQLLRMAVTS (230 aa). The tract at residues 56 to 75 is disordered; it reads TDDGQLEDTNNNNNSKRYYS. N-linked (GlcNAc...) asparagine glycosylation is found at asparagine 68, asparagine 97, asparagine 161, asparagine 175, asparagine 183, asparagine 194, asparagine 203, and asparagine 209. A helical transmembrane segment spans residues 231-253; that stretch reads VLLGLMILVTIIGNVFVIAAIIL. At 254–263 the chain is on the cytoplasmic side; it reads ERNLQNVANY. A helical membrane pass occupies residues 264 to 285; the sequence is LVASLAVADLFVACLVMPLGAV. Over 286-300 the chain is Extracellular; that stretch reads YEISQGWILGPELCD. A disulfide bond links cysteine 299 and cysteine 378. A helical transmembrane segment spans residues 301-322; that stretch reads IWTSCDVLCCTASILHLVAIAV. Over 323-341 the chain is Cytoplasmic; it reads DRYWAVTNIDYIHSRTSNR. The chain crosses the membrane as a helical span at residues 342 to 364; the sequence is VFMMIFCVWTAAVIVSLAPQFGW. Over 365 to 391 the chain is Extracellular; that stretch reads KDPDYLQRIEQQKCMVSQDVSYQVFAT. A helical transmembrane segment spans residues 392-413; that stretch reads CCTFYVPLLVILALYWKIYQTA. Topologically, residues 414–752 are cytoplasmic; sequence RKRIHRRRPR…AKRERKAAKT (339 aa). Disordered regions lie at residues 420 to 442, 460 to 516, 531 to 599, 617 to 640, and 674 to 743; these read RRPR…ATDT, KTGS…STSG, QQGK…SEDQ, LEQV…TSNA, and STLT…TLEA. Composition is skewed to polar residues over residues 482–502 and 532–542; these read GNST…SNVD and QGKSTAKSSAA. The span at 551 to 564 shows a compositional bias: basic and acidic residues; sequence RQEDDGQRPEHGEQ. Positions 565–575 are enriched in acidic residues; it reads EDREELEDQDE. The span at 582–593 shows a compositional bias: low complexity; that stretch reads TTATSATTAAGT. Residues 674–694 show a composition bias toward polar residues; that stretch reads STLTSCNQSHPLCGTANESPS. The span at 702-723 shows a compositional bias: low complexity; that stretch reads QPTTPQQQPHQQAHQQQQQQQQ. A helical membrane pass occupies residues 753–776; sequence LAIITGAFVVCWLPFFVMALTMPL. Residues 777 to 785 lie on the Extracellular side of the membrane; that stretch reads CAACQISDS. A helical transmembrane segment spans residues 786 to 808; it reads VASLFLWLGYFNSTLNPVIYTIF. The Cytoplasmic portion of the chain corresponds to 809-834; the sequence is SPEFRQAFKRILFGGHRPVHYRSGKL.

It belongs to the G-protein coupled receptor 1 family.

The protein localises to the cell membrane. Its function is as follows. This is one of the several different receptors for 5-hydroxytryptamine (serotonin), a biogenic hormone that functions as a neurotransmitter, a hormone, and a mitogen. The activity of this receptor is mediated by G proteins which inhibit adenylate cyclase. The polypeptide is 5-hydroxytryptamine receptor 2A (5-HT1A) (Drosophila melanogaster (Fruit fly)).